A 229-amino-acid chain; its full sequence is Uracil-DNA glycosylase (229 aa).

The active-site Proton acceptor is Asp-67.

This sequence belongs to the uracil-DNA glycosylase (UDG) superfamily. UNG family.

The protein resides in the cytoplasm. It catalyses the reaction Hydrolyzes single-stranded DNA or mismatched double-stranded DNA and polynucleotides, releasing free uracil.. In terms of biological role, excises uracil residues from the DNA which can arise as a result of misincorporation of dUMP residues by DNA polymerase or due to deamination of cytosine. This chain is Uracil-DNA glycosylase, found in Coxiella burnetii (strain CbuG_Q212) (Coxiella burnetii (strain Q212)).